A 130-amino-acid polypeptide reads, in one-letter code: Fluoride-specific ion channel FluC (130 aa).

A run of 4 helical transmembrane segments spans residues 4-24 (MINVVAVGTGGFVGAASRYFI), 35-55 (GFPIATLIINILGSFLIGLLT), 68-88 (LNLFLTTGILGGFTTFSTFSL), and 99-119 (AVFGVVNIVLSIAFCLTGVVL). Na(+) is bound by residues G78 and T81.

Belongs to the fluoride channel Fluc/FEX (TC 1.A.43) family.

Its subcellular location is the cell membrane. It carries out the reaction fluoride(in) = fluoride(out). Its activity is regulated as follows. Na(+) is not transported, but it plays an essential structural role and its presence is essential for fluoride channel function. Its function is as follows. Fluoride-specific ion channel. Important for reducing fluoride concentration in the cell, thus reducing its toxicity. In Ruminiclostridium cellulolyticum (strain ATCC 35319 / DSM 5812 / JCM 6584 / H10) (Clostridium cellulolyticum), this protein is Fluoride-specific ion channel FluC.